Here is a 456-residue protein sequence, read N- to C-terminus: Bifunctional protein GlmU (456 aa).

A pyrophosphorylase region spans residues 1–229 (MLNSAMSVVI…LSEVEGVNNR (229 aa)). UDP-N-acetyl-alpha-D-glucosamine is bound by residues 11–14 (LAAG), Lys25, Gln76, 81–82 (GT), 103–105 (YGD), Gly140, Glu154, Asn169, and Asn227. Asp105 contributes to the Mg(2+) binding site. Asn227 is a binding site for Mg(2+). The segment at 230–250 (LQLSALERIYQREQADKLLLA) is linker. Residues 251 to 456 (GVMLLDPARF…SGWQRPVKKK (206 aa)) form an N-acetyltransferase region. The UDP-N-acetyl-alpha-D-glucosamine site is built by Arg333 and Lys351. The active-site Proton acceptor is the His363. UDP-N-acetyl-alpha-D-glucosamine contacts are provided by Tyr366 and Asn377. Acetyl-CoA is bound by residues Ala380, 386–387 (NY), Ser405, Ala423, and Arg440.

It in the N-terminal section; belongs to the N-acetylglucosamine-1-phosphate uridyltransferase family. This sequence in the C-terminal section; belongs to the transferase hexapeptide repeat family. As to quaternary structure, homotrimer. The cofactor is Mg(2+).

It localises to the cytoplasm. It catalyses the reaction alpha-D-glucosamine 1-phosphate + acetyl-CoA = N-acetyl-alpha-D-glucosamine 1-phosphate + CoA + H(+). It carries out the reaction N-acetyl-alpha-D-glucosamine 1-phosphate + UTP + H(+) = UDP-N-acetyl-alpha-D-glucosamine + diphosphate. The protein operates within nucleotide-sugar biosynthesis; UDP-N-acetyl-alpha-D-glucosamine biosynthesis; N-acetyl-alpha-D-glucosamine 1-phosphate from alpha-D-glucosamine 6-phosphate (route II): step 2/2. It participates in nucleotide-sugar biosynthesis; UDP-N-acetyl-alpha-D-glucosamine biosynthesis; UDP-N-acetyl-alpha-D-glucosamine from N-acetyl-alpha-D-glucosamine 1-phosphate: step 1/1. Its pathway is bacterial outer membrane biogenesis; LPS lipid A biosynthesis. Catalyzes the last two sequential reactions in the de novo biosynthetic pathway for UDP-N-acetylglucosamine (UDP-GlcNAc). The C-terminal domain catalyzes the transfer of acetyl group from acetyl coenzyme A to glucosamine-1-phosphate (GlcN-1-P) to produce N-acetylglucosamine-1-phosphate (GlcNAc-1-P), which is converted into UDP-GlcNAc by the transfer of uridine 5-monophosphate (from uridine 5-triphosphate), a reaction catalyzed by the N-terminal domain. The polypeptide is Bifunctional protein GlmU (Pectobacterium atrosepticum (strain SCRI 1043 / ATCC BAA-672) (Erwinia carotovora subsp. atroseptica)).